Here is a 265-residue protein sequence, read N- to C-terminus: ClpXP adapter protein SpxH (265 aa).

This sequence belongs to the SpxH family. Interacts with Spx.

It is found in the cytoplasm. Functionally, adapter protein required for efficient degradation of Spx by ClpXP under non-stress conditions. Interaction with Spx stabilizes Spx and exposes the C-terminus of Spx for recognition and proteolysis by ClpXP. The polypeptide is ClpXP adapter protein SpxH (Staphylococcus haemolyticus (strain JCSC1435)).